The following is a 91-amino-acid chain: UPF0298 protein spyM18_0447 (91 aa).

Belongs to the UPF0298 family.

It localises to the cytoplasm. The chain is UPF0298 protein spyM18_0447 from Streptococcus pyogenes serotype M18 (strain MGAS8232).